We begin with the raw amino-acid sequence, 184 residues long: MIKELEDIFKEAEKDMKKAVEYYKNEIAGLRTSRASTALVEEIKVEYYGSKVPIKQLGTISVPEHNQIVIQVWDQNAVPAIEKAIREELNLNPTVQGNVIRVTLPPLTEERRRELVRLLHKITEEARVRVRNVRREAKEMIEELEGISEDEKKRALERLQKLTDKYIDEINKLMEAKEKEIMSV.

Belongs to the RRF family.

It is found in the cytoplasm. Responsible for the release of ribosomes from messenger RNA at the termination of protein biosynthesis. May increase the efficiency of translation by recycling ribosomes from one round of translation to another. This Aquifex aeolicus (strain VF5) protein is Ribosome-recycling factor.